A 232-amino-acid chain; its full sequence is Transcriptional regulatory protein CpxR (232 aa).

Residues 3–115 form the Response regulatory domain; the sequence is KILLVDDDRE…ELVARIRAIL (113 aa). Asp-51 carries the post-translational modification 4-aspartylphosphate. Positions 131–230 form a DNA-binding region, ompR/PhoB-type; that stretch reads SPTLEVDALV…LRGRGYLMVS (100 aa).

In terms of processing, phosphorylated by CpxA.

It localises to the cytoplasm. Member of the two-component regulatory system CpxA/CpxR. This system combats a variety of extracytoplasmic protein-mediated toxicities. It performs this function by increasing the synthesis of the periplasmic protease, DegP as well as that of CpxP protein. This is Transcriptional regulatory protein CpxR (cpxR) from Escherichia coli O157:H7.